Here is a 382-residue protein sequence, read N- to C-terminus: Bifunctional enzyme IspD/IspF (382 aa).

Positions 1-225 are 2-C-methyl-D-erythritol 4-phosphate cytidylyltransferase; the sequence is MTGKPSIAAL…AEERMAMISR (225 aa). The tract at residues 225-382 is 2-C-methyl-D-erythritol 2,4-cyclodiphosphate synthase; the sequence is RTAMGFDVHG…AVATVRVPSI (158 aa). The a divalent metal cation site is built by aspartate 231 and histidine 233. 4-CDP-2-C-methyl-D-erythritol 2-phosphate is bound by residues 231 to 233 and 257 to 258; these read DVH and HS. Histidine 265 contacts a divalent metal cation. 4-CDP-2-C-methyl-D-erythritol 2-phosphate is bound by residues 279-281, 355-358, phenylalanine 362, and arginine 365; these read DIG and TTTE.

This sequence in the N-terminal section; belongs to the IspD/TarI cytidylyltransferase family. IspD subfamily. It in the C-terminal section; belongs to the IspF family. The cofactor is a divalent metal cation.

The catalysed reaction is 2-C-methyl-D-erythritol 4-phosphate + CTP + H(+) = 4-CDP-2-C-methyl-D-erythritol + diphosphate. The enzyme catalyses 4-CDP-2-C-methyl-D-erythritol 2-phosphate = 2-C-methyl-D-erythritol 2,4-cyclic diphosphate + CMP. It functions in the pathway isoprenoid biosynthesis; isopentenyl diphosphate biosynthesis via DXP pathway; isopentenyl diphosphate from 1-deoxy-D-xylulose 5-phosphate: step 2/6. The protein operates within isoprenoid biosynthesis; isopentenyl diphosphate biosynthesis via DXP pathway; isopentenyl diphosphate from 1-deoxy-D-xylulose 5-phosphate: step 4/6. Bifunctional enzyme that catalyzes the formation of 4-diphosphocytidyl-2-C-methyl-D-erythritol from CTP and 2-C-methyl-D-erythritol 4-phosphate (MEP) (IspD), and catalyzes the conversion of 4-diphosphocytidyl-2-C-methyl-D-erythritol 2-phosphate (CDP-ME2P) to 2-C-methyl-D-erythritol 2,4-cyclodiphosphate (ME-CPP) with a corresponding release of cytidine 5-monophosphate (CMP) (IspF). The chain is Bifunctional enzyme IspD/IspF from Rhizorhabdus wittichii (strain DSM 6014 / CCUG 31198 / JCM 15750 / NBRC 105917 / EY 4224 / RW1) (Sphingomonas wittichii).